We begin with the raw amino-acid sequence, 631 residues long: Chaperone protein HtpG (631 aa).

The a; substrate-binding stretch occupies residues 1–339 (MSTNQETRGF…SNDLPLNVSR (339 aa)). A b region spans residues 340-555 (EILQDNKVTS…DDQMTTQMAK (216 aa)). A c region spans residues 556 to 631 (LFAAAGQAMP…NTLLSKLTSH (76 aa)).

The protein belongs to the heat shock protein 90 family. In terms of assembly, homodimer.

The protein resides in the cytoplasm. Its function is as follows. Molecular chaperone. Has ATPase activity. The sequence is that of Chaperone protein HtpG from Pasteurella multocida (strain Pm70).